A 467-amino-acid polypeptide reads, in one-letter code: Inactive pancreatic lipase-related protein 1 (467 aa).

Residues 1–17 (MLIFWTITLFLLGAAKG) form the signal peptide. Cystine bridges form between C21–C27 and C109–C120. The active-site Nucleophile is the S171. The active-site Charge relay system is the D194. 4 residues coordinate Ca(2+): E205, R208, D210, and D213. A disulfide bridge connects residues C255 and C279. The Charge relay system role is filled by H281. Intrachain disulfides connect C303/C314, C317/C322, and C451/C467. The 112-residue stretch at 356-467 (WRYGVSITLS…EDTLLTLTPC (112 aa)) folds into the PLAT domain.

Belongs to the AB hydrolase superfamily. Lipase family. As to expression, pancreas.

Its subcellular location is the secreted. Its function is as follows. May function as inhibitor of dietary triglyceride digestion. Lacks detectable lipase activity towards triglycerides, diglycerides, phosphatidylcholine, galactolipids or cholesterol esters (in vitro). This Homo sapiens (Human) protein is Inactive pancreatic lipase-related protein 1 (PNLIPRP1).